The chain runs to 521 residues: HTH-type transcriptional regulatory protein TyrR (521 aa).

The region spanning 2 to 72 (RLEVFCQDRI…GVTDVRTVPY (71 aa)) is the ACT domain. The PAS domain maps to 78-120 (EHRVLSALLVAMPEPVFSVDLRTKVELANPAAQNLFNLDENKI). Residues 207–436 (IVAVTPRMRQ…LKNALYRALT (230 aa)) form the Sigma-54 factor interaction domain. Residues 235-242 (GDTGTGKD) and 298-307 (ANGGSVLLDE) contribute to the ATP site. A DNA-binding region (H-T-H motif) is located at residues 489–509 (STRKLAKRLGVSHTAIANKLR).

In terms of assembly, homodimer. In presence of tyrosine (or high concentrations of phenylalanine or tryptophan) and ATP, it self-associates to form an hexamer.

Its subcellular location is the cytoplasm. Functionally, dual transcriptional regulator of the TyrR regulon, which includes a number of genes coding for proteins involved in the biosynthesis or transport of the three aromatic amino acids, phenylalanine, tyrosine and tryptophan. These three aromatic amino acids act as effectors which bind to the TyrR protein to form an active regulatory protein. Acts by binding specifically to TyrR boxes in the promoter region of the target genes. The chain is HTH-type transcriptional regulatory protein TyrR from Enterobacter agglomerans (Erwinia herbicola).